The following is a 73-amino-acid chain: Large ribosomal subunit protein bL31c (73 aa).

Belongs to the bacterial ribosomal protein bL31 family. Type A subfamily. Part of the 50S ribosomal subunit.

The protein localises to the plastid. It localises to the chloroplast. Binds the 23S rRNA. The chain is Large ribosomal subunit protein bL31c from Palmaria palmata (Dulse).